The primary structure comprises 279 residues: Ribosomal RNA small subunit methyltransferase A (279 aa).

S-adenosyl-L-methionine-binding residues include Leu-42, Gly-67, Glu-88, Asp-113, and Asn-129.

Belongs to the class I-like SAM-binding methyltransferase superfamily. rRNA adenine N(6)-methyltransferase family. RsmA subfamily.

The protein localises to the cytoplasm. The enzyme catalyses adenosine(1518)/adenosine(1519) in 16S rRNA + 4 S-adenosyl-L-methionine = N(6)-dimethyladenosine(1518)/N(6)-dimethyladenosine(1519) in 16S rRNA + 4 S-adenosyl-L-homocysteine + 4 H(+). Functionally, specifically dimethylates two adjacent adenosines (A1518 and A1519) in the loop of a conserved hairpin near the 3'-end of 16S rRNA in the 30S particle. May play a critical role in biogenesis of 30S subunits. The polypeptide is Ribosomal RNA small subunit methyltransferase A (Thermotoga maritima (strain ATCC 43589 / DSM 3109 / JCM 10099 / NBRC 100826 / MSB8)).